A 620-amino-acid polypeptide reads, in one-letter code: MDSHTLLQALIYLGSAALIVPIAVRLGLGSVLGYLIAGCIIGPWGLRLVTDAESILHFAEIGVVLMLFVIGLELDPQRLWKLRASVFGGGALQMVVCGGLIGLFCMFLGLRWQVAELIGMTLALSSTAIAMQAMNERNLTVSQVGRSAFAVLLFQDIAAIPLVAMIPLLAASGASTTLGAFALSALKVAGALALVVLLGRYVTRPALRFVARSGLREVFSAVALFLVFGFGLLLEEVGLSMAMGAFLAGVLLASSEYRHALESDIEPFKGLLLGLFFIGVGMSIDFGTLVENPLRILLLLAGFLAIKIVMLWLVARPLGVPAKQRRWFAVLLGQGSEFAFVVFGAAQMADVLEPEWAKALTLAVALSMAATPIFLVLLTRMEKTATGEAREADEIDEEQPRVIVAGFGRFGQIAGRLLLSSGVKMVVLDHDPDHIETLRKFGMKVFYGDATRMDLLESAGAAKAEVLINAIDDPQTNLQLSELVKSHFPHLQIIARARDVDHYIRLRQAGVAMPERETFEGALKSGRQALEALGLGRYEARERADLFRHFNTRMVEEMAKGENDPLSRAAAYKRTSAMLSEIITEDREHLSLIQRHGWQGTAEGKHSGEAADEPEVKPSI.

12 helical membrane-spanning segments follow: residues 4–24, 26–46, 54–74, 90–110, 114–134, 149–169, 178–198, 218–238, 270–290, 294–314, 327–347, and 359–379; these read HTLLQALIYLGSAALIVPIAV, LGLGSVLGYLIAGCIIGPWGL, SILHFAEIGVVLMLFVIGLEL, GALQMVVCGGLIGLFCMFLGL, VAELIGMTLALSSTAIAMQAM, FAVLLFQDIAAIPLVAMIPLL, LGAFALSALKVAGALALVVLL, VFSAVALFLVFGFGLLLEEVG, GLLLGLFFIGVGMSIDFGTLV, LRILLLLAGFLAIKIVMLWLV, WFAVLLGQGSEFAFVVFGAAQ, and ALTLAVALSMAATPIFLVLLT. An RCK N-terminal domain is found at 399-518; that stretch reads QPRVIVAGFG…AGVAMPERET (120 aa). A disordered region spans residues 599–620; the sequence is QGTAEGKHSGEAADEPEVKPSI.

Belongs to the monovalent cation:proton antiporter 2 (CPA2) transporter (TC 2.A.37) family. KefC subfamily. In terms of assembly, homodimer. Interacts with the regulatory subunit KefF.

The protein localises to the cell inner membrane. Functionally, pore-forming subunit of a potassium efflux system that confers protection against electrophiles. Catalyzes K(+)/H(+) antiport. The sequence is that of Glutathione-regulated potassium-efflux system protein KefC from Salmonella dublin (strain CT_02021853).